We begin with the raw amino-acid sequence, 455 residues long: Asparagine--tRNA ligase (455 aa).

It belongs to the class-II aminoacyl-tRNA synthetase family. In terms of assembly, homodimer.

The protein localises to the cytoplasm. It catalyses the reaction tRNA(Asn) + L-asparagine + ATP = L-asparaginyl-tRNA(Asn) + AMP + diphosphate + H(+). The protein is Asparagine--tRNA ligase of Lawsonia intracellularis (strain PHE/MN1-00).